The sequence spans 244 residues: Guanine nucleotide exchange factor rei-1 (244 aa).

Coiled-coil stretches lie at residues 6–39 (DQLISIRKQLENLNNATDDINSYEMKLETVKKQF) and 81–144 (VQQA…KAEK). The interval 221–244 (DQIHQERSSQSSLAPSSDAESDSS) is disordered. A compositionally biased stretch (low complexity) spans 228–238 (SSQSSLAPSSD).

Belongs to the SH3BP5 family. Homodimer, tetramer and multimer. Interacts with rab-11.1. Binds preferentially to the GDP-bound form of rab-11.1. As to expression, expressed in germ cells.

Its subcellular location is the cytoplasmic granule. It is found in the golgi apparatus membrane. Guanine nucleotide exchange factor for Rab GTPase Rab-11.1. Spatially and temporally regulates the distribution of Rab-11.1 to target membranes during embryogenesis. Plays a role in cytokinesis, probably by targeting rab-11.1 to the cleavage furrows. This is Guanine nucleotide exchange factor rei-1 from Caenorhabditis elegans.